A 296-amino-acid polypeptide reads, in one-letter code: 4-hydroxybenzoate octaprenyltransferase (296 aa).

8 helical membrane-spanning segments follow: residues 29–49 (IGVY…GKGA), 52–72 (LQTV…GCVI), 102–122 (ALVL…FTNA), 146–166 (YYPQ…AFTA), 169–189 (GELP…TVGY), 219–239 (VIIL…GARF), 241–261 (LGAC…WEFW), and 275–295 (FLHN…DYAV).

This sequence belongs to the UbiA prenyltransferase family. The cofactor is Mg(2+).

Its subcellular location is the cell inner membrane. It catalyses the reaction all-trans-octaprenyl diphosphate + 4-hydroxybenzoate = 4-hydroxy-3-(all-trans-octaprenyl)benzoate + diphosphate. It participates in cofactor biosynthesis; ubiquinone biosynthesis. Catalyzes the prenylation of para-hydroxybenzoate (PHB) with an all-trans polyprenyl group. Mediates the second step in the final reaction sequence of ubiquinone-8 (UQ-8) biosynthesis, which is the condensation of the polyisoprenoid side chain with PHB, generating the first membrane-bound Q intermediate 3-octaprenyl-4-hydroxybenzoate. In Pseudomonas syringae pv. syringae (strain B728a), this protein is 4-hydroxybenzoate octaprenyltransferase.